A 938-amino-acid polypeptide reads, in one-letter code: Isoleucine--tRNA ligase (938 aa).

A 'HIGH' region motif is present at residues 58–68; the sequence is PYANGSIHIGH. Lysine 183 is modified (N6-acetyllysine). Glutamate 561 contributes to the L-isoleucyl-5'-AMP binding site. The 'KMSKS' region motif lies at 602-606; the sequence is KMSKS. Residue lysine 605 participates in ATP binding. Residues cysteine 901, cysteine 904, cysteine 921, and cysteine 924 each contribute to the Zn(2+) site.

The protein belongs to the class-I aminoacyl-tRNA synthetase family. IleS type 1 subfamily. In terms of assembly, monomer. Requires Zn(2+) as cofactor.

It is found in the cytoplasm. The catalysed reaction is tRNA(Ile) + L-isoleucine + ATP = L-isoleucyl-tRNA(Ile) + AMP + diphosphate. In terms of biological role, catalyzes the attachment of isoleucine to tRNA(Ile). As IleRS can inadvertently accommodate and process structurally similar amino acids such as valine, to avoid such errors it has two additional distinct tRNA(Ile)-dependent editing activities. One activity is designated as 'pretransfer' editing and involves the hydrolysis of activated Val-AMP. The other activity is designated 'posttransfer' editing and involves deacylation of mischarged Val-tRNA(Ile). The polypeptide is Isoleucine--tRNA ligase (Escherichia coli O127:H6 (strain E2348/69 / EPEC)).